A 478-amino-acid chain; its full sequence is NADH-quinone oxidoreductase subunit N (478 aa).

Helical transmembrane passes span 7 to 27 (SFIPAIPEIVLLTLTSLLLIA), 46 to 66 (ILLVVGYLVLTSFSTSQVLTF), 74 to 94 (AFGDILKLVIVVVSMGIFLFS), 109 to 129 (FTLGLFGVLGMFVMVSAYNLI), 163 to 183 (FVLGALATGMLLYGFSMIYGA), 204 to 224 (VVLSFGVVFIVIGLAFKLGAV), 237 to 257 (APTAVTLYIGTAPKIAAFAML), 273 to 293 (QSLIVMISVLSLIVGAVITLV), 300 to 320 (LLAYSGIGHIGFILLGIIAAN), 328 to 348 (MFYTIVYSITALAGFGMIVAL), 371 to 391 (LALMMLFIMFSMAGIPPFVGF), 405 to 425 (GFTWLAVLAVVMAVISAFYYL), and 451 to 471 (WAVSFVSIALLLLGLMPSSLI).

The protein belongs to the complex I subunit 2 family. As to quaternary structure, NDH-1 is composed of 14 different subunits. Subunits NuoA, H, J, K, L, M, N constitute the membrane sector of the complex.

The protein localises to the cell inner membrane. The enzyme catalyses a quinone + NADH + 5 H(+)(in) = a quinol + NAD(+) + 4 H(+)(out). In terms of biological role, NDH-1 shuttles electrons from NADH, via FMN and iron-sulfur (Fe-S) centers, to quinones in the respiratory chain. The immediate electron acceptor for the enzyme in this species is believed to be ubiquinone. Couples the redox reaction to proton translocation (for every two electrons transferred, four hydrogen ions are translocated across the cytoplasmic membrane), and thus conserves the redox energy in a proton gradient. This chain is NADH-quinone oxidoreductase subunit N, found in Hydrogenovibrio crunogenus (strain DSM 25203 / XCL-2) (Thiomicrospira crunogena).